A 319-amino-acid polypeptide reads, in one-letter code: Acetyl-coenzyme A carboxylase carboxyl transferase subunit alpha (319 aa).

The 262-residue stretch at 35–296 folds into the CoA carboxyltransferase C-terminal domain; that stretch reads NIDEEVHRLR…KAQLLADLAD (262 aa).

The protein belongs to the AccA family. In terms of assembly, acetyl-CoA carboxylase is a heterohexamer composed of biotin carboxyl carrier protein (AccB), biotin carboxylase (AccC) and two subunits each of ACCase subunit alpha (AccA) and ACCase subunit beta (AccD).

The protein resides in the cytoplasm. The catalysed reaction is N(6)-carboxybiotinyl-L-lysyl-[protein] + acetyl-CoA = N(6)-biotinyl-L-lysyl-[protein] + malonyl-CoA. It functions in the pathway lipid metabolism; malonyl-CoA biosynthesis; malonyl-CoA from acetyl-CoA: step 1/1. Functionally, component of the acetyl coenzyme A carboxylase (ACC) complex. First, biotin carboxylase catalyzes the carboxylation of biotin on its carrier protein (BCCP) and then the CO(2) group is transferred by the carboxyltransferase to acetyl-CoA to form malonyl-CoA. The sequence is that of Acetyl-coenzyme A carboxylase carboxyl transferase subunit alpha from Citrobacter koseri (strain ATCC BAA-895 / CDC 4225-83 / SGSC4696).